We begin with the raw amino-acid sequence, 401 residues long: Beta-ketoadipyl-CoA thiolase (401 aa).

Residue Cys90 is the Acyl-thioester intermediate of the active site. Catalysis depends on proton acceptor residues His357 and Cys387.

It belongs to the thiolase-like superfamily. Thiolase family.

It carries out the reaction succinyl-CoA + acetyl-CoA = 3-oxoadipyl-CoA + CoA. It functions in the pathway aromatic compound metabolism; beta-ketoadipate pathway; acetyl-CoA and succinyl-CoA from 3-oxoadipate: step 2/2. In terms of biological role, catalyzes thiolytic cleavage of beta-ketoadipyl-CoA to succinyl-CoA and acetyl-CoA. This is Beta-ketoadipyl-CoA thiolase (catF) from Acinetobacter baylyi (strain ATCC 33305 / BD413 / ADP1).